A 465-amino-acid polypeptide reads, in one-letter code: tRNA-2-methylthio-N(6)-dimethylallyladenosine synthase (465 aa).

The MTTase N-terminal domain occupies 26 to 141; the sequence is MRAHIITYGC…LPEALKANER (116 aa). Residues C35, C71, C104, C173, C177, and C180 each coordinate [4Fe-4S] cluster. The Radical SAM core domain maps to 159–388; the sequence is PKGALSAHVT…IEKQKEWSYR (230 aa). One can recognise a TRAM domain in the interval 391-453; that stretch reads LEWVGKTVEV…PHLLFGEVVG (63 aa).

The protein belongs to the methylthiotransferase family. MiaB subfamily. In terms of assembly, monomer. [4Fe-4S] cluster serves as cofactor.

Its subcellular location is the cytoplasm. It catalyses the reaction N(6)-dimethylallyladenosine(37) in tRNA + (sulfur carrier)-SH + AH2 + 2 S-adenosyl-L-methionine = 2-methylsulfanyl-N(6)-dimethylallyladenosine(37) in tRNA + (sulfur carrier)-H + 5'-deoxyadenosine + L-methionine + A + S-adenosyl-L-homocysteine + 2 H(+). Functionally, catalyzes the methylthiolation of N6-(dimethylallyl)adenosine (i(6)A), leading to the formation of 2-methylthio-N6-(dimethylallyl)adenosine (ms(2)i(6)A) at position 37 in tRNAs that read codons beginning with uridine. In Thermus thermophilus (strain ATCC BAA-163 / DSM 7039 / HB27), this protein is tRNA-2-methylthio-N(6)-dimethylallyladenosine synthase.